Here is a 197-residue protein sequence, read N- to C-terminus: Holliday junction branch migration complex subunit RuvA (197 aa).

The interval 1 to 64 (MYEYIKGKYI…EDFIGVYGFL (64 aa)) is domain I. Positions 65–144 (TKDELSMFKL…DILEEDDEQI (80 aa)) are domain II. A flexible linker region spans residues 145-149 (INKVT). Positions 149–197 (TDDKKVLEAVAALVTLGYSEKEANKVINSCDKNNSLEQIIKEALKYLMK) are domain III.

It belongs to the RuvA family. As to quaternary structure, homotetramer. Forms an RuvA(8)-RuvB(12)-Holliday junction (HJ) complex. HJ DNA is sandwiched between 2 RuvA tetramers; dsDNA enters through RuvA and exits via RuvB. An RuvB hexamer assembles on each DNA strand where it exits the tetramer. Each RuvB hexamer is contacted by two RuvA subunits (via domain III) on 2 adjacent RuvB subunits; this complex drives branch migration. In the full resolvosome a probable DNA-RuvA(4)-RuvB(12)-RuvC(2) complex forms which resolves the HJ.

The protein localises to the cytoplasm. Its function is as follows. The RuvA-RuvB-RuvC complex processes Holliday junction (HJ) DNA during genetic recombination and DNA repair, while the RuvA-RuvB complex plays an important role in the rescue of blocked DNA replication forks via replication fork reversal (RFR). RuvA specifically binds to HJ cruciform DNA, conferring on it an open structure. The RuvB hexamer acts as an ATP-dependent pump, pulling dsDNA into and through the RuvAB complex. HJ branch migration allows RuvC to scan DNA until it finds its consensus sequence, where it cleaves and resolves the cruciform DNA. This Clostridium botulinum (strain Kyoto / Type A2) protein is Holliday junction branch migration complex subunit RuvA.